The sequence spans 379 residues: Bifunctional enzyme IspD/IspF (379 aa).

Positions 1–223 are 2-C-methyl-D-erythritol 4-phosphate cytidylyltransferase; it reads MTVAVIIVAA…RERKGLTMDV (223 aa). A 2-C-methyl-D-erythritol 2,4-cyclodiphosphate synthase region spans residues 224 to 379; that stretch reads RLGNGYDVHA…SIATVTLIGA (156 aa). A divalent metal cation-binding residues include Asp-230 and His-232. 4-CDP-2-C-methyl-D-erythritol 2-phosphate-binding positions include 230 to 232 and 256 to 257; these read DVH and HS. Residue His-264 coordinates a divalent metal cation. Residues 278 to 280, 354 to 357, Phe-361, and Arg-364 contribute to the 4-CDP-2-C-methyl-D-erythritol 2-phosphate site; these read DIG and TTSE.

The protein in the N-terminal section; belongs to the IspD/TarI cytidylyltransferase family. IspD subfamily. This sequence in the C-terminal section; belongs to the IspF family. A divalent metal cation is required as a cofactor.

It carries out the reaction 2-C-methyl-D-erythritol 4-phosphate + CTP + H(+) = 4-CDP-2-C-methyl-D-erythritol + diphosphate. It catalyses the reaction 4-CDP-2-C-methyl-D-erythritol 2-phosphate = 2-C-methyl-D-erythritol 2,4-cyclic diphosphate + CMP. The protein operates within isoprenoid biosynthesis; isopentenyl diphosphate biosynthesis via DXP pathway; isopentenyl diphosphate from 1-deoxy-D-xylulose 5-phosphate: step 2/6. Its pathway is isoprenoid biosynthesis; isopentenyl diphosphate biosynthesis via DXP pathway; isopentenyl diphosphate from 1-deoxy-D-xylulose 5-phosphate: step 4/6. Functionally, bifunctional enzyme that catalyzes the formation of 4-diphosphocytidyl-2-C-methyl-D-erythritol from CTP and 2-C-methyl-D-erythritol 4-phosphate (MEP) (IspD), and catalyzes the conversion of 4-diphosphocytidyl-2-C-methyl-D-erythritol 2-phosphate (CDP-ME2P) to 2-C-methyl-D-erythritol 2,4-cyclodiphosphate (ME-CPP) with a corresponding release of cytidine 5-monophosphate (CMP) (IspF). In Rhodobacter capsulatus (strain ATCC BAA-309 / NBRC 16581 / SB1003), this protein is Bifunctional enzyme IspD/IspF.